The sequence spans 418 residues: Elongation factor 1-gamma 1 (418 aa).

One can recognise a GST N-terminal domain in the interval 1 to 82; the sequence is MALVLHTFDG…YVTRSKSDNP (82 aa). One can recognise a GST C-terminal domain in the interval 87-213; that stretch reads SLIEYAHIEQ…GDVKQADSVP (127 aa). The disordered stretch occupies residues 211–265; sequence SVPQVQKKAAAPKEQKPKEAKKEAPKEAPKPKAAEKPEEEEEAPKPKPKNPLDLL. Positions 221 to 246 are enriched in basic and acidic residues; the sequence is APKEQKPKEAKKEAPKEAPKPKAAEK. The EF-1-gamma C-terminal domain maps to 258–418; sequence PKNPLDLLPP…EALLDAKCFK (161 aa).

As to quaternary structure, EF-1 is composed of four subunits: alpha, beta, delta, and gamma.

Its function is as follows. Probably plays a role in anchoring the complex to other cellular components. The polypeptide is Elongation factor 1-gamma 1 (Oryza sativa subsp. japonica (Rice)).